The following is a 102-amino-acid chain: UPF0058 protein MTH_224 (102 aa).

This sequence belongs to the UPF0058 family.

The sequence is that of UPF0058 protein MTH_224 from Methanothermobacter thermautotrophicus (strain ATCC 29096 / DSM 1053 / JCM 10044 / NBRC 100330 / Delta H) (Methanobacterium thermoautotrophicum).